A 427-amino-acid chain; its full sequence is Peptidase B (427 aa).

Lys195 and Asp200 together coordinate Mn(2+). Lys207 is an active-site residue. Asp218, Asp277, and Glu279 together coordinate Mn(2+). Residue Arg281 is part of the active site.

The protein belongs to the peptidase M17 family. In terms of assembly, homohexamer. Mn(2+) is required as a cofactor.

It is found in the cytoplasm. It carries out the reaction Release of an N-terminal amino acid, Xaa, from a peptide or arylamide. Xaa is preferably Glu or Asp but may be other amino acids, including Leu, Met, His, Cys and Gln.. Probably plays an important role in intracellular peptide degradation. This is Peptidase B from Shigella dysenteriae serotype 1 (strain Sd197).